We begin with the raw amino-acid sequence, 128 residues long: RYamide neuropeptides (128 aa).

Residues 1–23 (MHARKLIVVLVYILTVLVSVAVS) form the signal peptide. Positions 26 to 29 (YTSE) are excised as a propeptide. Tyr44 is modified (tyrosine amide). Residues 47–63 (GGPSPNNKENKVNIRPR) constitute a propeptide that is removed on maturation. Residue Tyr73 is modified to Tyrosine amide. The propeptide occupies 77–128 (SGWSPNASLVYPVSTPLCGLDEDLSCAYTGISDLYRCTPRKGESEEFTTSSN).

The protein localises to the secreted. Functionally, neuropeptides RYamide-1 and RYamide-2 are ligands for the G-protein coupled receptor RYa-R. RYamide-2 is the most potent activator of RYa-R. This chain is RYamide neuropeptides, found in Tribolium castaneum (Red flour beetle).